The sequence spans 219 residues: UPF0502 protein HCH_06091 (219 aa).

The protein belongs to the UPF0502 family.

The polypeptide is UPF0502 protein HCH_06091 (Hahella chejuensis (strain KCTC 2396)).